The primary structure comprises 530 residues: Sugar transport protein MST6 (530 aa).

Residues 1–18 (MAGGVVVNNGGGKDYPGK) lie on the Cytoplasmic side of the membrane. Residues 19-39 (LTMFVLFACIVAATGGLIFGY) traverse the membrane as a helical segment. Over 40–81 (DIGISGGVTSMNPFLIKFFPSVYRKEQAAEKNQSNQYCKFDS) the chain is Extracellular. The chain crosses the membrane as a helical span at residues 82–102 (PLLTMFTSSLYLAALVASFFA). Residues 103–119 (STVTRVAGRKWSMFGGG) are Cytoplasmic-facing. Residues 120-140 (VTFLVGAALNGAAKNVLMLIL) form a helical membrane-spanning segment. The Extracellular portion of the chain corresponds to 141–142 (GR). A helical transmembrane segment spans residues 143-163 (VLLGVGVGFANQSVPLYLSEM). Residues 164 to 169 (APARLR) are Cytoplasmic-facing. The helical transmembrane segment at 170-190 (GMLNIGFQLMITIGILCANLI) threads the bilayer. The Extracellular segment spans residues 191-204 (NYGTAKIKGGWGWR). Residues 205-225 (VSLALAAVPAAIIAVGALFLP) traverse the membrane as a helical segment. The Cytoplasmic portion of the chain corresponds to 226–291 (DTPNSLIDRG…YRPQLTMAIA (66 aa)). Residues 292–312 (IPLFQQLTGINVIMFYAPVLF) traverse the membrane as a helical segment. Over 313–323 (KTLGFADDASL) the chain is Extracellular. Residues 324-344 (MSAVITGLVNVFATFVSIVTV) traverse the membrane as a helical segment. Over 345–359 (DRLGRRKLFLQGGTQ) the chain is Cytoplasmic. A helical transmembrane segment spans residues 360–380 (MLACQIVVGSLIGAKFGFSGV). Topologically, residues 381-388 (ADIPKAYA) are extracellular. Residues 389-409 (AFVVLFICAYVAGFAWSWGPL) form a helical membrane-spanning segment. The Cytoplasmic portion of the chain corresponds to 410–428 (GWLVPSEIFPLEIRSAGQS). Residues 429 to 449 (INVSVNMLFTFIIAQAFLPML) traverse the membrane as a helical segment. The Extracellular portion of the chain corresponds to 450 to 453 (CRFK). The chain crosses the membrane as a helical span at residues 454 to 474 (FILFFFFGAWVVIMTLFVAFF). Over 475–530 (LPETKNVPIEEMVLVWKSHWYWGRFIRDEDVHVGADVEMPAAGNRNGKVDPAKLAN) the chain is Cytoplasmic.

The protein belongs to the major facilitator superfamily. Sugar transporter (TC 2.A.1.1) family. In terms of tissue distribution, expressed in leaf blades, leaf sheaths, anthers, ovaries and embryos. Expressed at low levels in roots and shoots.

It localises to the cell membrane. Mediates active uptake of hexoses by sugar:proton symport. Can transport glucose, fructose, mannose, galactose, xylose and ribose. In Oryza sativa subsp. japonica (Rice), this protein is Sugar transport protein MST6.